Here is a 103-residue protein sequence, read N- to C-terminus: Small ribosomal subunit protein uS10 (103 aa).

This sequence belongs to the universal ribosomal protein uS10 family. Part of the 30S ribosomal subunit.

Its function is as follows. Involved in the binding of tRNA to the ribosomes. In Azotobacter vinelandii (strain DJ / ATCC BAA-1303), this protein is Small ribosomal subunit protein uS10.